The sequence spans 166 residues: Mitochondrial fission process protein 1 (166 aa).

2 helical membrane passes run 34 to 54 and 78 to 98; these read SLVP…YVLA and ALAV…IPGF. The residue at position 123 (Lys123) is an N6-succinyllysine. The helical transmembrane segment at 129 to 149 threads the bilayer; that stretch reads LGLLAIPVIIHPIDRSVDFLL.

It belongs to the MTFP1 family.

Its subcellular location is the mitochondrion inner membrane. In terms of biological role, involved in the mitochondrial division probably by regulating membrane fission. Loss-of-function leads to apoptosis. The chain is Mitochondrial fission process protein 1 (Mtfp1) from Mus musculus (Mouse).